A 467-amino-acid chain; its full sequence is Proton extrusion protein PxcA (467 aa).

The interval Thr183–Thr205 is disordered. A compositionally biased stretch (basic and acidic residues) spans Pro191–Ala203. Helical transmembrane passes span Phe249–Val269, Ile352–Leu372, Ile391–Ile411, and Phe427–Ile447.

It belongs to the CemA family.

The protein resides in the cell inner membrane. Its function is as follows. Required for H(+) efflux immediately after light irradiation to form a rapid H(+) concentration gradient across the thylakoid membranes. Together with PxcL, contributes to transient H(+) uptake following dark to light transition. This Trichormus variabilis (strain ATCC 29413 / PCC 7937) (Anabaena variabilis) protein is Proton extrusion protein PxcA.